A 319-amino-acid polypeptide reads, in one-letter code: GCN5-related N-acetyltransferase 5, chloroplastic (319 aa).

Residues Met-1–Ser-55 constitute a chloroplast transit peptide. In terms of domain architecture, N-acetyltransferase spans Met-109–Pro-297. Acetyl-CoA contacts are provided by residues Met-218–Val-220, Arg-226–Trp-231, Asp-258–Ala-260, and Tyr-265. Catalysis depends on Tyr-265, which acts as the Proton donor.

The protein belongs to the acetyltransferase family. GNAT subfamily. As to quaternary structure, oligomer. In terms of processing, autoacetylated. As to expression, expressed in green tissues.

The protein resides in the plastid. Its subcellular location is the chloroplast. The catalysed reaction is an N-terminal L-alpha-aminoacyl-[protein] + acetyl-CoA = N-terminal N(alpha)-acetyl-L-alpha-aminoacyl-[protein] + CoA + H(+). It carries out the reaction L-lysyl-[protein] + acetyl-CoA = N(6)-acetyl-L-lysyl-[protein] + CoA + H(+). The enzyme catalyses N-terminal L-alanyl-[protein] + acetyl-CoA = N-terminal N(alpha)-acetyl-L-alanyl-[protein] + CoA + H(+). It catalyses the reaction N-terminal L-seryl-[protein] + acetyl-CoA = N-terminal N(alpha)-acetyl-L-seryl-[protein] + CoA + H(+). The catalysed reaction is N-terminal L-methionyl-[protein] + acetyl-CoA = N-terminal N(alpha)-acetyl-L-methionyl-[protein] + CoA + H(+). It carries out the reaction N-terminal L-valyl-[protein] + acetyl-CoA = N-terminal N(alpha)-acetyl-L-valyl-[protein] + CoA + H(+). The enzyme catalyses N-terminal L-threonyl-[protein] + acetyl-CoA = N-terminal N(alpha)-acetyl-L-threonyl-[protein] + CoA + H(+). Its function is as follows. Protein acetyltransferase with dual specificity triggering both N-alpha-acetylation (NTA), with a large spectrum of modified N-termini, including methionine, alanine, serine and to a lower extent threonine and valine as substrates, and epsilon-lysine acetylation (KA). The protein is GCN5-related N-acetyltransferase 5, chloroplastic of Arabidopsis thaliana (Mouse-ear cress).